Reading from the N-terminus, the 172-residue chain is Large ribosomal subunit protein uL10 (172 aa).

This sequence belongs to the universal ribosomal protein uL10 family. Part of the ribosomal stalk of the 50S ribosomal subunit. The N-terminus interacts with L11 and the large rRNA to form the base of the stalk. The C-terminus forms an elongated spine to which L12 dimers bind in a sequential fashion forming a multimeric L10(L12)X complex.

Its function is as follows. Forms part of the ribosomal stalk, playing a central role in the interaction of the ribosome with GTP-bound translation factors. The sequence is that of Large ribosomal subunit protein uL10 from Pelodictyon phaeoclathratiforme (strain DSM 5477 / BU-1).